The following is a 34-amino-acid chain: Photosystem II reaction center protein M (34 aa).

Residues Ile5–Ile25 traverse the membrane as a helical segment.

The protein belongs to the PsbM family. As to quaternary structure, PSII is composed of 1 copy each of membrane proteins PsbA, PsbB, PsbC, PsbD, PsbE, PsbF, PsbH, PsbI, PsbJ, PsbK, PsbL, PsbM, PsbT, PsbX, PsbY, PsbZ, Psb30/Ycf12, at least 3 peripheral proteins of the oxygen-evolving complex and a large number of cofactors. It forms dimeric complexes.

Its subcellular location is the plastid. The protein resides in the chloroplast thylakoid membrane. Its function is as follows. One of the components of the core complex of photosystem II (PSII). PSII is a light-driven water:plastoquinone oxidoreductase that uses light energy to abstract electrons from H(2)O, generating O(2) and a proton gradient subsequently used for ATP formation. It consists of a core antenna complex that captures photons, and an electron transfer chain that converts photonic excitation into a charge separation. This subunit is found at the monomer-monomer interface. The sequence is that of Photosystem II reaction center protein M from Triticum aestivum (Wheat).